The sequence spans 153 residues: Transcriptional repressor NrdR (153 aa).

Residues 3 to 34 (CPYCGHPDTRVVDSRPSDEGMAIRRRRECPSC) fold into a zinc finger. Residues 49–136 (LMVVKRDGRK…VYREFDSVER (88 aa)) form the ATP-cone domain.

The protein belongs to the NrdR family. It depends on Zn(2+) as a cofactor.

In terms of biological role, negatively regulates transcription of bacterial ribonucleotide reductase nrd genes and operons by binding to NrdR-boxes. The polypeptide is Transcriptional repressor NrdR (Thermus thermophilus (strain ATCC BAA-163 / DSM 7039 / HB27)).